The primary structure comprises 956 residues: DNA ligase 4 (956 aa).

Residues Glu-307, Lys-309, Ile-310, Arg-314, Glu-371, Phe-409, Glu-476, Lys-481, Lys-498, and Lys-500 each coordinate ATP. Residue Lys-309 is the N6-AMP-lysine intermediate of the active site. Residue Glu-371 participates in Mg(2+) binding. Glu-476 is a binding site for Mg(2+). Positions 666–700 (LEDRKRRNAGPGRGAKRLKLANVSSDEDELGTDER) are disordered. BRCT domains lie at 700–793 (RPTS…PRNL) and 857–956 (PKGM…DYPL).

This sequence belongs to the ATP-dependent DNA ligase family. Mg(2+) is required as a cofactor.

It is found in the nucleus. It carries out the reaction ATP + (deoxyribonucleotide)n-3'-hydroxyl + 5'-phospho-(deoxyribonucleotide)m = (deoxyribonucleotide)n+m + AMP + diphosphate.. Its function is as follows. DNA ligase involved in DNA non-homologous end joining (NHEJ); required for double-strand break (DSB) repair. The protein is DNA ligase 4 (LIG4) of Yarrowia lipolytica (strain CLIB 122 / E 150) (Yeast).